The primary structure comprises 194 residues: MEERVLNVELRTKTGKGISRQLRRNNFIPGVVYGKGMESVPVSLSTKELSTAIAGEGGRNHLLTLKGGGGLDGQMVIVAELLQDCLKGTPRHVDLHKINMADKVRVKVPVNLVGSAVGVKEGGLLDFAMHEIEIECFPTHIPEHIDVDVTELTIGHSLHIGDIKELPGIKVLGDATVSVVSILGKVKEEPVVDA.

It belongs to the bacterial ribosomal protein bL25 family. CTC subfamily. In terms of assembly, part of the 50S ribosomal subunit; part of the 5S rRNA/L5/L18/L25 subcomplex. Contacts the 5S rRNA. Binds to the 5S rRNA independently of L5 and L18.

In terms of biological role, this is one of the proteins that binds to the 5S RNA in the ribosome where it forms part of the central protuberance. This is Large ribosomal subunit protein bL25 from Geotalea uraniireducens (strain Rf4) (Geobacter uraniireducens).